We begin with the raw amino-acid sequence, 91 residues long: Small ribosomal subunit protein bS16 (91 aa).

This sequence belongs to the bacterial ribosomal protein bS16 family.

This is Small ribosomal subunit protein bS16 from Staphylococcus haemolyticus (strain JCSC1435).